The sequence spans 255 residues: Acetylglutamate kinase (255 aa).

Residues 40-41 (GG), arginine 62, and asparagine 153 contribute to the substrate site.

The protein belongs to the acetylglutamate kinase family. ArgB subfamily.

Its subcellular location is the cytoplasm. The catalysed reaction is N-acetyl-L-glutamate + ATP = N-acetyl-L-glutamyl 5-phosphate + ADP. It participates in amino-acid biosynthesis; L-arginine biosynthesis; N(2)-acetyl-L-ornithine from L-glutamate: step 2/4. Catalyzes the ATP-dependent phosphorylation of N-acetyl-L-glutamate. This Bacillus anthracis (strain A0248) protein is Acetylglutamate kinase.